The primary structure comprises 220 residues: Probable chemoreceptor glutamine deamidase CheD (220 aa).

Belongs to the CheD family.

It catalyses the reaction L-glutaminyl-[protein] + H2O = L-glutamyl-[protein] + NH4(+). Functionally, probably deamidates glutamine residues to glutamate on methyl-accepting chemotaxis receptors (MCPs), playing an important role in chemotaxis. The polypeptide is Probable chemoreceptor glutamine deamidase CheD (Cupriavidus metallidurans (strain ATCC 43123 / DSM 2839 / NBRC 102507 / CH34) (Ralstonia metallidurans)).